A 76-amino-acid chain; its full sequence is Contulakin-G (76 aa).

The signal sequence occupies residues 1 to 22 (MQTAYWVMVMMMVWIAAPLSEG). Residues 23–50 (GKLNDVIRGLVPDDITPQLILGSLISRR) constitute a propeptide that is removed on maturation. Position 51 is a pyrrolidone carboxylic acid (Gln51). Residues 51-76 (QSEEGGSNATKKPYILRASDQVASGP) form a disordered region. Residue Thr60 is glycosylated (O-linked (GalNAc...) threonine). The propeptide occupies 67–76 (RASDQVASGP).

The protein belongs to the conotoxin C superfamily. O-glycosylated. The glycosylation seems to enhance the affinity to the neurotensin receptors. As to expression, expressed by the venom duct.

It localises to the secreted. Functionally, acts as an agonist of neurotensin receptors. It binds to human neurotensin type 1 receptor (NTSR1), rat neurotensin types 1 and 2 receptors (NTSR1/NTSR2) and mouse neurotensin type 3 receptor (SORT1). The polypeptide is Contulakin-G (Conus geographus (Geography cone)).